We begin with the raw amino-acid sequence, 397 residues long: F-box protein At4g11590 (397 aa).

An F-box domain is found at 24-70 (EKNFNDVPLDVAIEIFMRLPVKSVARFLLLSKFWAEIIRSRHFITSF).

As to quaternary structure, part of a SCF (ASK-cullin-F-box) protein ligase complex. Interacts with ASK16.

The protein localises to the nucleus. Its pathway is protein modification; protein ubiquitination. In terms of biological role, component of SCF(ASK-cullin-F-box) E3 ubiquitin ligase complexes, which may mediate the ubiquitination and subsequent proteasomal degradation of target proteins. In Arabidopsis thaliana (Mouse-ear cress), this protein is F-box protein At4g11590.